The sequence spans 172 residues: Keratin-associated protein 13-3 (172 aa).

A run of 5 repeats spans residues Cys-46–Gly-55, Cys-56–Ser-65, Cys-66–Pro-75, Cys-76–Thr-85, and Cys-92–Gly-101. The segment at Cys-46–Gly-101 is 5 X 10 AA approximate repeats.

Belongs to the PMG family. In terms of assembly, interacts with hair keratins.

In the hair cortex, hair keratin intermediate filaments are embedded in an interfilamentous matrix, consisting of hair keratin-associated proteins (KRTAP), which are essential for the formation of a rigid and resistant hair shaft through their extensive disulfide bond cross-linking with abundant cysteine residues of hair keratins. The matrix proteins include the high-sulfur and high-glycine-tyrosine keratins. The protein is Keratin-associated protein 13-3 (KRTAP13-3) of Homo sapiens (Human).